Reading from the N-terminus, the 1055-residue chain is MALRRLGAALLLLPLLAAVEETLMDSTTATAELGWMVHPPSGWEEVSGYDENMNTIRTYQVCNVFESSQNNWLRTKFIRRRGAHRIHVEMKFSVRDCSSIPSVPGSCKETFNLYYYEADFDSATKTFPNWMENPWVKVDTIAADESFSQVDLGGRVMKINTEVRSFGPVSRSGFYLAFQDYGGCMSLIAVRVFYRKCPRIIQNGAIFQETLSGAESTSLVAARGSCIANAEEVDVPIKLYCNGDGEWLVPIGRCMCKAGFEAVENGTVCRGCPSGTFKANQGDEACTHCPINSRTTSEGATNCVCRNGYYRADLDPLDMPCTTIPSAPQAVISSVNETSLMLEWTPPRDSGGREDLVYNIICKSCGSGRGACTRCGDNVQYAPRQLGLTEPRIYISDLLAHTQYTFEIQAVNGVTDQSPFSPQFASVNITTNQAAPSAVSIMHQVSRTVDSITLSWSQPDQPNGVILDYELQYYEKELSEYNATAIKSPTNTVTVQGLKAGAIYVFQVRARTVAGYGRYSGKMYFQTMTEAEYQTSIQEKLPLIIGSSAAGLVFLIAVVVIAIVCNRRGFERADSEYTDKLQHYTSGHMTPGMKIYIDPFTYEDPNEAVREFAKEIDISCVKIEQVIGAGEFGEVCSGHLKLPGKREIFVAIKTLKSGYTEKQRRDFLSEASIMGQFDHPNVIHLEGVVTKSTPVMIITEFMENGSLDSFLRQNDGQFTVIQLVGMLRGIAAGMKYLADMNYVHRDLAARNILVNSNLVCKVSDFGLSRFLEDDTSDPTYTSALGGKIPIRWTAPEAIQYRKFTSASDVWSYGIVMWEVMSYGERPYWDMTNQDVINAIEQDYRLPPPMDCPSALHQLMLDCWQKDRNHRPKFGQIVNTLDKMIRNPNSLKAMAPLSSGINLPLLDRTIPDYTSFNTVDEWLEAIKMGQYKESFANAGFTSFDVVSQMMMEDILRVGVTLAGHQKKILNSIQVMRAQMNQIQSVEGQPLARRPRATGRTKRCQPRDVTKKTCNSNDGKKKGMGKKKTDPGRGREIQGIFFKEDSHKESNDCSCGG.

A signal peptide spans 1-18 (MALRRLGAALLLLPLLAA). The Extracellular segment spans residues 19–543 (VEETLMDSTT…QTSIQEKLPL (525 aa)). One can recognise an Eph LBD domain in the interval 20–202 (EETLMDSTTA…FYRKCPRIIQ (183 aa)). Disulfide bonds link cysteine 62/cysteine 184 and cysteine 97/cysteine 107. Asparagine 265, asparagine 336, asparagine 428, and asparagine 482 each carry an N-linked (GlcNAc...) asparagine glycan. 2 Fibronectin type-III domains span residues 324-434 (IPSA…TNQA) and 435-530 (APSA…TMTE). Residues 544–564 (IIGSSAAGLVFLIAVVVIAIV) traverse the membrane as a helical segment. Topologically, residues 565–1055 (CNRRGFERAD…KESNDCSCGG (491 aa)) are cytoplasmic. Positions 621–884 (VKIEQVIGAG…QIVNTLDKMI (264 aa)) constitute a Protein kinase domain. ATP-binding positions include 627-635 (IGAGEFGEV) and lysine 653. The active-site Proton acceptor is aspartate 746. Residue lysine 891 forms a Glycyl lysine isopeptide (Lys-Gly) (interchain with G-Cter in ubiquitin) linkage. Residues 913-977 (TSFNTVDEWL…LNSIQVMRAQ (65 aa)) enclose the SAM domain. Phosphoserine occurs at positions 983 and 984. Positions 984 to 986 (VEG) match the PDZ-binding (in isoform 2) motif. The disordered stretch occupies residues 990–1055 (ARRPRATGRT…KESNDCSCGG (66 aa)). Basic residues predominate over residues 991-1002 (RRPRATGRTKRC). Over residues 1025–1049 (KKTDPGRGREIQGIFFKEDSHKESN) the composition is skewed to basic and acidic residues.

The protein belongs to the protein kinase superfamily. Tyr protein kinase family. Ephrin receptor subfamily. As to quaternary structure, heterotetramer upon binding of the ligand. The heterotetramer is composed of an ephrin dimer and a receptor dimer. Interacts (via PDZ-binding motif) with GRIP1 and PICK1 (via PDZ domain). Interacts with ARHGEF15; mediates ARHGEF15 phosphorylation, ubiquitination and degradation by the proteasome. Interacts with AQP1; involved in endolymph production in the inner ear. Interacts with SPSB1 and SPSB4. The phosphorylated form interacts with RASA1 (via SH2 domain 1). Interacts with EFNA5. Interacts with SH2D3C. Autophosphorylated; ligand binding stimulates autophosphorylation on tyrosine residues. In terms of processing, polyubiquitinated; ligand binding stimulates ubiquitination. Ubiquitinated by RNF186 at Lys-891, mainly through 'Lys-27'-linked polyubiquitin chains. Ubiquitinated by CRL2(KLHDC2) E3 ligase complex. Post-translationally, ligand binding induces cleavage by matrix metalloproteinases (MMPs) such as MMP7/MMP9, producing an EphB2/N-terminal fragment (NTF) and a C-terminal long fragment (EphB2-LF). EphB2-LF is further cleaved by MMPs, producing EphB2/CTF1 which is further cleaved by the PS1/gamma-secretase producing EphB2/CTF2. As to expression, brain, heart, lung, kidney, placenta, pancreas, liver and skeletal muscle. Preferentially expressed in fetal brain.

It localises to the cell membrane. Its subcellular location is the cell projection. It is found in the axon. The protein resides in the dendrite. The catalysed reaction is L-tyrosyl-[protein] + ATP = O-phospho-L-tyrosyl-[protein] + ADP + H(+). Its function is as follows. Receptor tyrosine kinase which binds promiscuously transmembrane ephrin-B family ligands residing on adjacent cells, leading to contact-dependent bidirectional signaling into neighboring cells. The signaling pathway downstream of the receptor is referred to as forward signaling while the signaling pathway downstream of the ephrin ligand is referred to as reverse signaling. Functions in axon guidance during development. Involved in the guidance of commissural axons, that form a major interhemispheric connection between the 2 temporal lobes of the cerebral cortex. Also involved in guidance of contralateral inner ear efferent growth cones at the midline and of retinal ganglion cell axons to the optic disk. In addition to axon guidance, also regulates dendritic spines development and maturation and stimulates the formation of excitatory synapses. Upon activation by EFNB1, abolishes the ARHGEF15-mediated negative regulation on excitatory synapse formation. Controls other aspects of development including angiogenesis, palate development and in inner ear development through regulation of endolymph production. Forward and reverse signaling through the EFNB2/EPHB2 complex regulate movement and adhesion of cells that tubularize the urethra and septate the cloaca. May function as a tumor suppressor. May be involved in the regulation of platelet activation and blood coagulation. This is Ephrin type-B receptor 2 (EPHB2) from Homo sapiens (Human).